A 293-amino-acid chain; its full sequence is 4-diphosphocytidyl-2-C-methyl-D-erythritol kinase (293 aa).

Lys10 is a catalytic residue. 96 to 106 (PIAAGLGGGSS) is a binding site for ATP. Residue Asp138 is part of the active site.

This sequence belongs to the GHMP kinase family. IspE subfamily.

It carries out the reaction 4-CDP-2-C-methyl-D-erythritol + ATP = 4-CDP-2-C-methyl-D-erythritol 2-phosphate + ADP + H(+). The protein operates within isoprenoid biosynthesis; isopentenyl diphosphate biosynthesis via DXP pathway; isopentenyl diphosphate from 1-deoxy-D-xylulose 5-phosphate: step 3/6. Functionally, catalyzes the phosphorylation of the position 2 hydroxy group of 4-diphosphocytidyl-2C-methyl-D-erythritol. In Caulobacter sp. (strain K31), this protein is 4-diphosphocytidyl-2-C-methyl-D-erythritol kinase.